Reading from the N-terminus, the 259-residue chain is MGKYNLTALRVRQTALSQKAAGKIKRLPQWVDVIGDIPPAQVLVRNQPQQHQLVRQRVKTLPGASKPQVVFETEEKRVKPKKASRMFQPVQIKFEEDQLRKEFFRDHPWELARPRVLVETSGKDYERYDWSRLQQPGKRLDGESVVQRQLWLLNNVPDMTKSAAYDIARREFYRLRLQEDIERRVAAEEAEATGATFGPTRLEIGMELENQEYERWKQWAKMEAQIQEQRAASFTGSALPSSEESAPVDEETEKVPQQV.

Residues 230 to 244 (RAASFTGSALPSSEE) show a composition bias toward polar residues. The interval 230-259 (RAASFTGSALPSSEESAPVDEETEKVPQQV) is disordered.

It belongs to the mitochondrion-specific ribosomal protein mS23 family. In terms of assembly, component of the mitochondrial small ribosomal subunit.

The protein resides in the mitochondrion. The protein is Small ribosomal subunit protein mS23 (rsm25) of Aspergillus terreus (strain NIH 2624 / FGSC A1156).